The primary structure comprises 97 residues: Large ribosomal subunit protein bL28 (97 aa).

Belongs to the bacterial ribosomal protein bL28 family.

This is Large ribosomal subunit protein bL28 from Rickettsia prowazekii (strain Madrid E).